Consider the following 825-residue polypeptide: Zygotic DNA replication licensing factor mcm6-B (825 aa).

The segment at 159-186 adopts a C4-type zinc-finger fold; it reads CLDCQTLVRDVEQQFKYTQPSICRNPVC. Positions 347 to 554 constitute an MCM domain; sequence LYHNLCTSLF…TDYAIARRIV (208 aa). 397 to 404 contributes to the ATP binding site; that stretch reads GDPSTAKS. Positions 529 to 532 match the Arginine finger motif; sequence SRFD. The span at 668–679 shows a compositional bias: acidic residues; the sequence is DQEDEHEVEEPQ. Positions 668–690 are disordered; sequence DQEDEHEVEEPQEGINGDADVPN.

Belongs to the MCM family. In terms of assembly, component of the mcm2-7 complex (RLF-M). The complex forms a toroidal hexameric ring with the proposed subunit order mcm2-mcm6-mcm4-mcm7-mcm3-mcm5 (By simililarity). Begins to associate with zmcm3, mcm4 and mcm7 into mcm complexes at the neurula stage.

Its subcellular location is the nucleus. The catalysed reaction is ATP + H2O = ADP + phosphate + H(+). Its function is as follows. Acts as a component of the mcm2-7 complex (mcm complex) which is the putative replicative helicase essential for 'once per cell cycle' DNA replication initiation and elongation in eukaryotic cells. The active ATPase sites in the mcm2-7 ring are formed through the interaction surfaces of two neighboring subunits such that a critical structure of a conserved arginine finger motif is provided in trans relative to the ATP-binding site of the Walker A box of the adjacent subunit. The six ATPase active sites, however, are likely to contribute differentially to the complex helicase activity. The existence of maternal and zygotic forms of mcm3 and mcm6 suggests that specific forms of mcm2-7 complexes may be used during different stages of development. May replace mmcm6 in the mcm2-7 complex. The sequence is that of Zygotic DNA replication licensing factor mcm6-B (zmcm6-b) from Xenopus laevis (African clawed frog).